The following is a 267-amino-acid chain: Thyroxine 5-deiodinase (267 aa).

Residues 1–15 lie on the Cytoplasmic side of the membrane; the sequence is MHDSGGVQMARALKH. The helical; Signal-anchor for type II membrane protein transmembrane segment at 16–36 threads the bilayer; sequence AALCLMLLPRFLLAAVMLWLL. Topologically, residues 37–267 are extracellular; it reads DFLCIRKKVL…VNSQTAVLHV (231 aa). The active site involves selenocysteine 131. Selenocysteine 131 is a non-standard amino acid (selenocysteine).

This sequence belongs to the iodothyronine deiodinase family. Monomer. Homodimer. May undergo minor heretodimerization with DIO1 and DIO2.

The protein localises to the cell membrane. It is found in the endosome membrane. It carries out the reaction 3,3',5'-triiodo-L-thyronine + iodide + A + H(+) = L-thyroxine + AH2. It catalyses the reaction 3,3'-diiodo-L-thyronine + iodide + A + H(+) = 3,3',5-triiodo-L-thyronine + AH2. The catalysed reaction is 3-iodo-L-thyronine + iodide + A + H(+) = 3,5-diiodo-L-thyronine + AH2. The enzyme catalyses L-thyronine + iodide + A + H(+) = 3-iodo-L-thyronine + AH2. It carries out the reaction 3',5'-diiodo-L-thyronine + iodide + A + H(+) = 3,3',5'-triiodo-L-thyronine + AH2. It catalyses the reaction 3'-iodo-L-thyronine + iodide + A + H(+) = 3,3'-diiodo-L-thyronine + AH2. The catalysed reaction is 3,3',5'-triiodothyronamine + iodide + A + H(+) = 3,3',5,5'-tetraiodothyronamine + AH2. The enzyme catalyses 3',5'-diiodothyronamine + iodide + A + H(+) = 3,3',5'-triiodothyronamine + AH2. It carries out the reaction 3,3'-diiodothyronamine + iodide + A + H(+) = 3,3',5-triiodothyronamine + AH2. It catalyses the reaction 3-iodothyronamine + iodide + A + H(+) = 3,5-diiodothyronamine + AH2. The catalysed reaction is 3'-iodothyronamine + iodide + A + H(+) = 3,3'-diiodothyronamine + AH2. The enzyme catalyses thyronamine + iodide + A + H(+) = 3-iodothyronamine + AH2. Its function is as follows. Plays a crucial role in the metabolism of thyroid hormones (TH) and has specific roles in TH activation and inactivation by deiodination. Catalyzes the deiodination of L-thyroxine (T4) to 3,3',5'-triiodothyronine (rT3), 3,5,3'-triiodothyronine (T3) to 3,3'-diiodothyronine (3,3'-T2), 3,5-diiodothyronine (3,5-T2) to 3-monoiodothyronine (3-T1), rT3 to 3',5'-diiodothyronine (3',5'-T2) and 3,3'-T2 to 3'-monoiodothyronine (3'-T1) via inner-ring deiodination (IRD). Catalyzes the deiodination of 3-T1 to L-thyronine (T0) via outer-ring deiodination (ORD). Catalyzes the tyrosyl ring deiodinations of 3,3',5,5'-tetraiodothyronamine, 3,3',5'-triiodothyronamine, 3,5,3'-triiodothyronamine, 3,5-diiodothyronamine, 3,3'-diiodothyronamine and 3-iodothyronamine. This is Thyroxine 5-deiodinase (dio3) from Sparus aurata (Gilthead sea bream).